A 351-amino-acid chain; its full sequence is Putative phospho-N-acetylmuramoyl-pentapeptide-transferase (351 aa).

10 helical membrane passes run 2–22 (MEFL…TLFI), 44–64 (AGTP…VTVL), 71–91 (LVLT…DDLL), 158–178 (GEKI…GAVG), 181–201 (GGFY…VGAI), 212–232 (GMAA…LGLS), 235–255 (ALPF…NRHP), 258–278 (IFMG…AVML), 281–301 (TVYF…VSLL), and 328–348 (IVLL…YMTG).

The protein belongs to the glycosyltransferase 4 family. MraY subfamily. Requires Mg(2+) as cofactor.

The protein localises to the cell membrane. The enzyme catalyses UDP-N-acetyl-alpha-D-muramoyl-L-alanyl-gamma-D-glutamyl-meso-2,6-diaminopimeloyl-D-alanyl-D-alanine + di-trans,octa-cis-undecaprenyl phosphate = di-trans,octa-cis-undecaprenyl diphospho-N-acetyl-alpha-D-muramoyl-L-alanyl-D-glutamyl-meso-2,6-diaminopimeloyl-D-alanyl-D-alanine + UMP. This Methanothermobacter thermautotrophicus (strain ATCC 29096 / DSM 1053 / JCM 10044 / NBRC 100330 / Delta H) (Methanobacterium thermoautotrophicum) protein is Putative phospho-N-acetylmuramoyl-pentapeptide-transferase.